We begin with the raw amino-acid sequence, 331 residues long: 2-hydroxyacid dehydrogenase homolog (331 aa).

Residues 154–155 (KI), 232–234 (TSR), and aspartate 258 each bind NAD(+). Arginine 234 is a catalytic residue. Glutamate 263 is a catalytic residue. The active-site Proton donor is the histidine 295. 295 to 298 (HQAF) contacts NAD(+).

It belongs to the D-isomer specific 2-hydroxyacid dehydrogenase family.

This chain is 2-hydroxyacid dehydrogenase homolog (ddh), found in Haemophilus influenzae (strain ATCC 51907 / DSM 11121 / KW20 / Rd).